Reading from the N-terminus, the 490-residue chain is Inosine-5'-monophosphate dehydrogenase (490 aa).

CBS domains are found at residues 96-154 and 158-218; these read MIIN…SKPV and MTKE…CKDE. NAD(+) is bound by residues Asp252 and 302 to 304; that span reads GVG. Residues Gly304 and Gly306 each contribute to the K(+) site. Ser307 is a binding site for IMP. Residue Cys309 participates in K(+) binding. Catalysis depends on Cys309, which acts as the Thioimidate intermediate. Residues 342–344, 365–366, and 389–393 each bind IMP; these read DGG, GN, and YRGMG. The active-site Proton acceptor is the Arg406. Residue Glu418 coordinates IMP. Residues Glu472, Ser473, and His474 each contribute to the K(+) site.

Belongs to the IMPDH/GMPR family. As to quaternary structure, homotetramer. It depends on K(+) as a cofactor.

The enzyme catalyses IMP + NAD(+) + H2O = XMP + NADH + H(+). It participates in purine metabolism; XMP biosynthesis via de novo pathway; XMP from IMP: step 1/1. With respect to regulation, mycophenolic acid (MPA) is a non-competitive inhibitor that prevents formation of the closed enzyme conformation by binding to the same site as the amobile flap. In contrast, mizoribine monophosphate (MZP) is a competitive inhibitor that induces the closed conformation. MPA is a potent inhibitor of mammalian IMPDHs but a poor inhibitor of the bacterial enzymes. MZP is a more potent inhibitor of bacterial IMPDH. In terms of biological role, catalyzes the conversion of inosine 5'-phosphate (IMP) to xanthosine 5'-phosphate (XMP), the first committed and rate-limiting step in the de novo synthesis of guanine nucleotides, and therefore plays an important role in the regulation of cell growth. The protein is Inosine-5'-monophosphate dehydrogenase of Aquifex aeolicus (strain VF5).